A 329-amino-acid polypeptide reads, in one-letter code: Phospholipid scramblase 4 (329 aa).

The tract at residues 1-51 is disordered; it reads MSGVVPTAPEQPAGEMENQTKPPDPRPDAPPEYNSHFLPGPPGTAVPPPTG. Residues 1–98 form a proline-rich domain (PRD) region; sequence MSGVVPTAPE…PMPNQSVPIT (98 aa). Residues 1-303 are Cytoplasmic-facing; the sequence is MSGVVPTAPE…IHFPLDLDVK (303 aa). Residues 18 to 25 carry the SH3-binding 1 motif; the sequence is NQTKPPDP. The short motif at 30–33 is the PPxY motif element; the sequence is PPEY. The span at 39–51 shows a compositional bias: pro residues; sequence PGPPGTAVPPPTG. An SH3-binding 2 motif is present at residues 41-49; it reads PPGTAVPPP. Residues tyrosine 83 and tyrosine 88 each carry the phosphotyrosine; by ABL modification. Residues 98–106 carry the SH3-binding 3 motif; it reads TWMPGPTPM. Residues cysteine 197, cysteine 198, cysteine 199, cysteine 201, and cysteine 202 are each lipidated (S-palmitoyl cysteine). The Nuclear localization signal motif lies at 271–283; sequence NIGSIIRKWNGLL. A helical transmembrane segment spans residues 304–320; that stretch reads MKAMIFGACFLIDFMYF. Residues 321-329 are Extracellular-facing; that stretch reads ERSPPQRSR.

This sequence belongs to the phospholipid scramblase family. In terms of assembly, interacts with PDCD6. Interacts with KPNA2; this interaction mediates the nucleus import of PLSCR4. The cofactor is Ca(2+). Requires Mg(2+) as cofactor. Zn(2+) is required as a cofactor. In terms of tissue distribution, expressed in heart, brain, placenta, lung, liver, kidney, pancreas, spleen, thymus, prostate, testis, uterus, small intestine and colon. Not detected in peripheral blood lymphocytes.

The protein resides in the cell membrane. It is found in the nucleus. The catalysed reaction is a 1,2-diacyl-sn-glycero-3-phosphocholine(in) = a 1,2-diacyl-sn-glycero-3-phosphocholine(out). It carries out the reaction a 1,2-diacyl-sn-glycero-3-phospho-L-serine(in) = a 1,2-diacyl-sn-glycero-3-phospho-L-serine(out). Its function is as follows. Catalyzes metal ion-induced ATP-independent rapid bidirectional and non-specific movement of phospholipids (lipid scrambling or lipid flip-flop) between the inner and outer leaflet of the plasma membrane and participates in the redistribution of phospholipids between membrane leaflets. Metal ions bind to the calcium-binding site and induce conformation change in the protein. Has a greater affi nity for Ca(2+) than Mg(2+) and Zn(2+). The sequence is that of Phospholipid scramblase 4 from Homo sapiens (Human).